Here is a 375-residue protein sequence, read N- to C-terminus: Stomatin-2 (375 aa).

The interval 1 to 75 (MKTQPSEESA…IPVPTGQPRG (75 aa)) is disordered. A compositionally biased stretch (low complexity) spans 11 to 50 (SPAPVNPGNSGNSGNRRASSTRISFSDQLDGGDSGDSSSN). The helical transmembrane segment at 120–140 (GLGFCGWFLMGLSWIMVISTF) threads the bilayer.

Belongs to the band 7/mec-2 family.

It is found in the membrane. Its function is as follows. May be involved in cilia-related function. The protein is Stomatin-2 (sto-2) of Caenorhabditis elegans.